Here is a 1356-residue protein sequence, read N- to C-terminus: Kinesin-like protein KIF24 (1356 aa).

Residues 1–64 (MASWLYECLC…FQLIKIIKIM (64 aa)) form the SAM domain. The interval 93 to 119 (GPRRQLHFDSPSASKDKMANNETGSLS) is disordered. S102 bears the Phosphoserine mark. The region spanning 218 to 541 (KIRVCVRKRP…LRYADRVKEL (324 aa)) is the Kinesin motor domain. Residue 308–315 (GQTGAGKT) participates in ATP binding. Phosphoserine is present on S473. Positions 473–702 (SLLALKECIR…PTRGKKVQPV (230 aa)) are interaction with MPHOSPH9. Residues 552-571 (TSQNQTSANASPKRIQSSPV) are compositionally biased toward polar residues. Disordered regions lie at residues 552–581 (TSQN…CSPK), 597–664 (PTKV…LCSE), 788–840 (EGRL…STAL), 897–947 (RGAL…HQKP), and 964–998 (VPEQ…DQRD). S579 is modified (phosphoserine). A Phosphothreonine; by NEK2 modification is found at T615. Position 616 is a phosphoserine; by NEK2 (S616). Phosphoserine occurs at positions 640, 817, and 820. Residues 640–653 (SPRKGTTRSGHSIK) show a composition bias toward basic residues. Acidic residues predominate over residues 810 to 821 (QAEDLDDSDFSE). Residues 830–840 (QPAMKQGSTAL) show a composition bias toward polar residues. The segment covering 970–979 (GSLSSPSPEN) has biased composition (polar residues). S1008 bears the Phosphoserine mark. The disordered stretch occupies residues 1109–1140 (LSSSPPDNRPSGDLPALSPSPIHQHSPDKLPG).

It belongs to the TRAFAC class myosin-kinesin ATPase superfamily. Kinesin family. As to quaternary structure, interacts with CCP110, CEP97, TALPID3. Interacts with MPHOSPH9. Expressed in brain, spinal cord, and small intestine.

It is found in the cytoplasm. The protein localises to the cytoskeleton. The protein resides in the microtubule organizing center. Its subcellular location is the centrosome. It localises to the centriole. Its function is as follows. Microtubule-dependent motor protein that acts as a negative regulator of ciliogenesis by mediating recruitment of CCP110 to mother centriole in cycling cells, leading to restrict nucleation of cilia at centrioles. Mediates depolymerization of microtubules of centriolar origin, possibly to suppress aberrant cilia formation. Following activation by NEK2 involved in disassembly of primary cilium during G2/M phase but does not disassemble fully formed ciliary axonemes. As cilium assembly and disassembly is proposed to coexist in a dynamic equilibrium may suppress nascent cilium assembly and, potentially, ciliar re-assembly in cells that have already disassembled their cilia ensuring the completion of cilium removal in the later stages of the cell cycle. Plays an important role in recruiting MPHOSPH9, a negative regulator of cilia formation to the distal end of mother centriole. The protein is Kinesin-like protein KIF24 (Kif24) of Mus musculus (Mouse).